The primary structure comprises 273 residues: N(omega)-hydroxy-L-arginine amidinohydrolase (273 aa).

Mn(2+) contacts are provided by Asp109, His111, Asp113, Asp198, and Asp200.

The protein belongs to the arginase family. The cofactor is Mn(2+).

The enzyme catalyses N(omega)-hydroxy-L-arginine + H2O = hydroxyurea + L-ornithine. Functionally, involved in the biosynthesis of the antibiotic D-cycloserine (DCS), a cyclic structural analog of D-alanine, used as an antitubercular agent. Catalyzes the hydrolysis of N(omega)-hydroxy-L-arginine (NHA) to yield hydroxyurea (HU) and L-ornithine. This is N(omega)-hydroxy-L-arginine amidinohydrolase from Streptomyces lavendulae.